The following is a 594-amino-acid chain: MNNSKIPKLSFHSDPNNVTRDFPKTKRQKVQKREMDMILTPNNNKLNILHSSGSGIRRCYTDDTSATYTKKLTFGGDPKIIERVKNNERKVRKDIDSLLNAISEIEKESVRIHARELPAITLELDAKVKACRELQNEIDGLSTEMDLKDNQCDLQRKNVELSSKNIVSMHAVKVQEFENDLEEELSNAKREWTYKLMEVENLKPDERLTDEMRQLKTEFEEVNRKLFILQNENENECKNYKKELDKKFEIFKKVKNDARIELDGEQERLSKVLKDLQDTHGELKENIKTCRDEFNDFEKRIGEAEVNFHSMELAVVPLKKKLASTSQALTQVQEEKKQVEGEANNWKKKYVNELEKVQQELYTRQNLATSIEEIKGYTRCFAYANERQMPDEFHINYVDRCICENSGEKRVQVFDRVVLEEIHKDHKRLYNECIPFLEKYISKLINCSIIVVSQQPTAPMKKTLLKQLIEQYGENYKMTLNILHLDGSIKHSDVGLDNPTEIRDLSQDEECMNILTLDTKLGKDEESHSMNIYIGSMSTVQLNRELDDAPSVLSHILTKTKQCFVFKINAGENIEKALALAGKLKRTITLPQLD.

A disordered region spans residues Met1–Lys29. Residues Ile81–Glu360 are a coiled coil.

As to quaternary structure, interacts with KAR3; the interaction is direct.

It localises to the nucleus. It is found in the cytoplasm. The protein resides in the cytoskeleton. The protein localises to the microtubule organizing center. Its subcellular location is the spindle pole body. It localises to the spindle. Its function is as follows. Together with the minus end-directed microtubule motor KAR3, involved in spindle midzone assembly, karyogamy (nuclear fusion) during mating, and with an essential function in meiosis I. To contribute to spindle midzone assembly during mitotic metaphase, the KAR3-CIK1 motor cross-links anti-parallel microtubules to align them on the spindle axis; as the motor travels polewards splayed microtubules are pulled into alignment. During the karyogamy (nuclear fusion) step of mating, KAR3-CIK1 cross-links antiparallel cytoplasmic microtubules emanating from the spindle pole bodies of mating partners; the motor activity of KAR3 creates the force that pulls the nuclei together by sliding cross-linked microtubules past one another. KAR3-CIK1 promotes microtubule shortening predominantly from the microtubule plus-end. Required for interhomolog recombination, synapsis of homologous chromosomes and establishment of a meiosis I spindle. This Saccharomyces cerevisiae (strain ATCC 204508 / S288c) (Baker's yeast) protein is Spindle pole body-associated protein CIK1 (CIK1).